The sequence spans 491 residues: Glutamyl-tRNA(Gln) amidotransferase subunit A (491 aa).

Catalysis depends on charge relay system residues Lys-80 and Ser-155. Catalysis depends on Ser-179, which acts as the Acyl-ester intermediate.

It belongs to the amidase family. GatA subfamily. Heterotrimer of A, B and C subunits.

It catalyses the reaction L-glutamyl-tRNA(Gln) + L-glutamine + ATP + H2O = L-glutaminyl-tRNA(Gln) + L-glutamate + ADP + phosphate + H(+). Its function is as follows. Allows the formation of correctly charged Gln-tRNA(Gln) through the transamidation of misacylated Glu-tRNA(Gln) in organisms which lack glutaminyl-tRNA synthetase. The reaction takes place in the presence of glutamine and ATP through an activated gamma-phospho-Glu-tRNA(Gln). This Salinispora tropica (strain ATCC BAA-916 / DSM 44818 / JCM 13857 / NBRC 105044 / CNB-440) protein is Glutamyl-tRNA(Gln) amidotransferase subunit A.